The chain runs to 162 residues: Urease subunit beta (162 aa).

Positions 116 to 162 (WRRSSAAGDAPQELPQVEAAERGRKLDDATDVDTNVGTEEGFEEGRN) are disordered. A compositionally biased stretch (basic and acidic residues) spans 134-143 (AAERGRKLDD).

The protein belongs to the urease beta subunit family. Heterotrimer of UreA (gamma), UreB (beta) and UreC (alpha) subunits. Three heterotrimers associate to form the active enzyme.

Its subcellular location is the cytoplasm. It carries out the reaction urea + 2 H2O + H(+) = hydrogencarbonate + 2 NH4(+). Its pathway is nitrogen metabolism; urea degradation; CO(2) and NH(3) from urea (urease route): step 1/1. This is Urease subunit beta from Corynebacterium glutamicum (strain ATCC 13032 / DSM 20300 / JCM 1318 / BCRC 11384 / CCUG 27702 / LMG 3730 / NBRC 12168 / NCIMB 10025 / NRRL B-2784 / 534).